We begin with the raw amino-acid sequence, 75 residues long: Exodeoxyribonuclease 7 small subunit (75 aa).

It belongs to the XseB family. Heterooligomer composed of large and small subunits.

It is found in the cytoplasm. The enzyme catalyses Exonucleolytic cleavage in either 5'- to 3'- or 3'- to 5'-direction to yield nucleoside 5'-phosphates.. Functionally, bidirectionally degrades single-stranded DNA into large acid-insoluble oligonucleotides, which are then degraded further into small acid-soluble oligonucleotides. The sequence is that of Exodeoxyribonuclease 7 small subunit from Citrifermentans bemidjiense (strain ATCC BAA-1014 / DSM 16622 / JCM 12645 / Bem) (Geobacter bemidjiensis).